Reading from the N-terminus, the 363-residue chain is Ankyrin repeat domain-containing protein 40 (363 aa).

Methionine 1 bears the N-acetylmethionine mark. 2 ANK repeats span residues 9-38 (EQQE…DVNS) and 43-72 (NGWT…DREI). Residues 135-167 (DSTQLQNGGPSPPPVSPPADSSPPLLPPTETPL) are disordered. A compositionally biased stretch (pro residues) spans 144–164 (PSPPPVSPPADSSPPLLPPTE). Serine 176 is modified (phosphoserine).

The polypeptide is Ankyrin repeat domain-containing protein 40 (Ankrd40) (Mus musculus (Mouse)).